A 472-amino-acid chain; its full sequence is Eukaryotic translation initiation factor 2 subunit 3 (472 aa).

At A2 the chain carries N-acetylalanine. S16 is subject to Phosphoserine. One can recognise a tr-type G domain in the interval 39–248 (QATINIGTIG…IVKKIPVPPR (210 aa)). The segment at 48-55 (GHVAHGKS) is G1. 51–56 (AHGKST) contacts GTP. The interval 76-80 (NITIK) is G2. The G3 stretch occupies residues 134–137 (DCPG). Residues 190–193 (NKID) and 225–227 (SAQ) each bind GTP. Residues 190–193 (NKID) form a G4 region. The tract at residues 225-227 (SAQ) is G5. Residues 457-469 (GQIRRGVTIKPTV) form an interacts with CDC123 region.

Belongs to the TRAFAC class translation factor GTPase superfamily. Classic translation factor GTPase family. EIF2G subfamily. In terms of assembly, eukaryotic translation initiation factor 2 eIF2 is a heterotrimeric complex composed of an alpha (EIF2S1), a beta (EIF2S2) and a gamma (EIF2S3) chain. eIF2 is member of the 43S pre-initiation complex (43S PIC). Interacts (via C-terminus) with CDC123; the interaction is direct.

It localises to the cytoplasm. The protein resides in the cytosol. The catalysed reaction is GTP + H2O = GDP + phosphate + H(+). Its function is as follows. Member of the eIF2 complex that functions in the early steps of protein synthesis by forming a ternary complex with GTP and initiator tRNA. This complex binds to a 40S ribosomal subunit, followed by mRNA binding to form the 43S pre-initiation complex (43S PIC). Junction of the 60S ribosomal subunit to form the 80S initiation complex is preceded by hydrolysis of the GTP bound to eIF2 and release of an eIF2-GDP binary complex. In order for eIF2 to recycle and catalyze another round of initiation, the GDP bound to eIF2 must exchange with GTP by way of a reaction catalyzed by eIF-2B. In Pongo abelii (Sumatran orangutan), this protein is Eukaryotic translation initiation factor 2 subunit 3 (EIF2S3).